Reading from the N-terminus, the 269-residue chain is MEHNNNPGTPQMSSEFPASTTQTSSSAAAYDNSSHFEKEQSLMRWEQDLKLRERALANNQSAADITGPHVVVPAPATAHPRQANFPSSYPMIRLNLEEDIAIREYRQIVKFGIFVFLWEAAALVYNWVVSIGTIVYSAVDNFFLALFYMIVGVPTLYFLTRKLYRAASVPERARKSYAYLMALLGVVLFNIIFFVGFKRSGMNGLIWVISLFHNDHNAVGAMATVSLFFWFVGVFLTIALFIMYLRLNNTKRQRGEIQNAGFREYIKSR.

The span at 1–17 (MEHNNNPGTPQMSSEFP) shows a compositional bias: polar residues. Positions 1–35 (MEHNNNPGTPQMSSEFPASTTQTSSSAAAYDNSSH) are disordered. Positions 18–29 (ASTTQTSSSAAA) are enriched in low complexity. 4 helical membrane passes run 111-131 (FGIF…VVSI), 139-159 (VDNF…LYFL), 177-197 (YAYL…FVGF), and 225-245 (VSLF…IMYL).

Belongs to the SCAMP family.

The protein resides in the membrane. It localises to the spore coat. The chain is Prespore protein Dd31 (spiA) from Dictyostelium discoideum (Social amoeba).